The primary structure comprises 251 residues: Elongator complex protein 6 (251 aa).

Belongs to the ELP6 family. Component of the elongator complex composed of Elp1, Elp2, Elp3, Elp4, Elp5 and Elp6. The elongator complex associates with and stabilizes microtubules; efficient interaction requires the full complex. Interacts with InR/Insulin-like receptor; the interaction may stabilize Elp6.

Its subcellular location is the cytoplasm. It localises to the nucleus. It is found in the cytoskeleton. The protein localises to the spindle. The protein operates within tRNA modification; 5-methoxycarbonylmethyl-2-thiouridine-tRNA biosynthesis. Component of the elongator complex, which is required for multiple tRNA modifications, including mcm5U (5-methoxycarbonylmethyl uridine), mcm5s2U (5-methoxycarbonylmethyl-2-thiouridine), and ncm5U (5-carbamoylmethyl uridine). The elongator complex catalyzes formation of carboxymethyluridine in the wobble base at position 34 in tRNAs. Binding by the elongator complex stabilizes microtubules and promotes their growth. This induces central spindle asymmetry, promoting polarized signaling endosome trafficking during asymmetric cell division and cell fate assignation of sensory organ precursor cells. Required in germ line cells for microtubule organization involved in oocyte polarization and chromosome organization. Involved in InR-TOR (insulin-like receptor-target of rapamycin) signaling regulation of cellular metabolism, autophagy and apoptosis. The protein is Elongator complex protein 6 of Drosophila melanogaster (Fruit fly).